The following is an 82-amino-acid chain: Apovitellenin-1 (82 aa).

The protein belongs to the apovitellenin family. As to quaternary structure, monomer. In terms of tissue distribution, found in egg yolk and in plasma.

In terms of biological role, protein component of the very low density lipoprotein (VLDL) of egg-laying females. Potent lipoprotein lipase inhibitor, preventing the loss of triglycerides from VLDL on their way from the liver to the growing oocytes. This Anas platyrhynchos (Mallard) protein is Apovitellenin-1.